The following is a 155-amino-acid chain: SsrA-binding protein (155 aa).

It belongs to the SmpB family.

The protein localises to the cytoplasm. Its function is as follows. Required for rescue of stalled ribosomes mediated by trans-translation. Binds to transfer-messenger RNA (tmRNA), required for stable association of tmRNA with ribosomes. tmRNA and SmpB together mimic tRNA shape, replacing the anticodon stem-loop with SmpB. tmRNA is encoded by the ssrA gene; the 2 termini fold to resemble tRNA(Ala) and it encodes a 'tag peptide', a short internal open reading frame. During trans-translation Ala-aminoacylated tmRNA acts like a tRNA, entering the A-site of stalled ribosomes, displacing the stalled mRNA. The ribosome then switches to translate the ORF on the tmRNA; the nascent peptide is terminated with the 'tag peptide' encoded by the tmRNA and targeted for degradation. The ribosome is freed to recommence translation, which seems to be the essential function of trans-translation. The sequence is that of SsrA-binding protein from Alkaliphilus oremlandii (strain OhILAs) (Clostridium oremlandii (strain OhILAs)).